The following is a 297-amino-acid chain: Putative lipid kinase MamU (297 aa).

The 89-residue stretch at 43–131 folds into the DAGKc domain; it reads EGKDMGRMVR…MDVGRVNDRY (89 aa). 68–74 lines the ATP pocket; sequence GDGSLSR. Residue Glu-274 is the Proton acceptor of the active site.

The protein belongs to the diacylglycerol/lipid kinase family.

It localises to the cytoplasm. Functionally, might phosphorylate lipids. In Magnetospirillum gryphiswaldense (strain DSM 6361 / JCM 21280 / NBRC 15271 / MSR-1), this protein is Putative lipid kinase MamU.